The following is a 462-amino-acid chain: PTS system mannitol-specific cryptic EIICB component (462 aa).

Topologically, residues 1–24 (MENKSARAKVQAFGGFLTAMVIPN) are cytoplasmic. A PTS EIIC type-2 domain is found at 13 to 344 (FGGFLTAMVI…LKMEKTVETE (332 aa)). The chain crosses the membrane as a helical span at residues 25–46 (IGAFIAWGFITALFIPTGWLPN). The Periplasmic portion of the chain corresponds to 47–50 (EHFA). Residues 51–71 (KIVGPMITYLLPVMIGSTGGH) form a helical membrane-spanning segment. At 72–134 (LVGGKRGAVM…AGFEMVINNF (63 aa)) the chain is on the cytoplasmic side. A helical transmembrane segment spans residues 135 to 156 (SLGIAGMLLCLLGFEVIGPAVL). Topologically, residues 157-165 (IANTFVKEC) are periplasmic. The chain crosses the membrane as a helical span at residues 166–186 (IEALVHAGYLPLLSVINEPAK). At 187–273 (VLFLNNAIDQ…VLMKPLTIIA (87 aa)) the chain is on the cytoplasmic side. A helical membrane pass occupies residues 274–293 (MIAGGMSGTWMFNLLDGGLV). The Periplasmic segment spans residues 294–313 (AGPSPGSIFAYLALTPKGSF). The helical transmembrane segment at 314 to 335 (LATIAGVTVGTLVSFAITSLIL) threads the bilayer. Topologically, residues 336–462 (KMEKTVETES…FNQLTAEHKH (127 aa)) are cytoplasmic. The PTS EIIB type-2 domain occupies 371–461 (KRIAFVCDAG…LFNQLTAEHK (91 aa)). The active-site Phosphocysteine intermediate; for EIIB activity is Cys-377. A Phosphocysteine; by EIIA modification is found at Cys-377.

Its subcellular location is the cell inner membrane. It carries out the reaction D-mannitol(out) + N(pros)-phospho-L-histidyl-[protein] = D-mannitol 1-phosphate(in) + L-histidyl-[protein]. Its function is as follows. The phosphoenolpyruvate-dependent sugar phosphotransferase system (sugar PTS), a major carbohydrate active transport system, catalyzes the phosphorylation of incoming sugar substrates concomitantly with their translocation across the cell membrane. The enzyme II CmtAB PTS system is involved in D-mannitol transport. This chain is PTS system mannitol-specific cryptic EIICB component (cmtA), found in Escherichia coli O157:H7.